Consider the following 447-residue polypeptide: Na(+)-translocating NADH-quinone reductase subunit A (447 aa).

It belongs to the NqrA family. Composed of six subunits; NqrA, NqrB, NqrC, NqrD, NqrE and NqrF.

It catalyses the reaction a ubiquinone + n Na(+)(in) + NADH + H(+) = a ubiquinol + n Na(+)(out) + NAD(+). Its function is as follows. NQR complex catalyzes the reduction of ubiquinone-1 to ubiquinol by two successive reactions, coupled with the transport of Na(+) ions from the cytoplasm to the periplasm. NqrA to NqrE are probably involved in the second step, the conversion of ubisemiquinone to ubiquinol. The sequence is that of Na(+)-translocating NADH-quinone reductase subunit A from Photorhabdus laumondii subsp. laumondii (strain DSM 15139 / CIP 105565 / TT01) (Photorhabdus luminescens subsp. laumondii).